A 654-amino-acid chain; its full sequence is Probable protein phosphatase 2C 23 (654 aa).

Residues C11–D30 are disordered. A Phosphoserine modification is found at S147. Residues D243–L645 enclose the PPM-type phosphatase domain. Mn(2+) is bound by residues D280 and G281. The tract at residues D309–N336 is disordered. Mn(2+) is bound by residues D573 and D636.

The protein belongs to the PP2C family. Mg(2+) is required as a cofactor. The cofactor is Mn(2+). Expressed in seedlings, roots, leaves, stems, young inflorescences, flowers and siliques.

Its subcellular location is the nucleus. It catalyses the reaction O-phospho-L-seryl-[protein] + H2O = L-seryl-[protein] + phosphate. The catalysed reaction is O-phospho-L-threonyl-[protein] + H2O = L-threonyl-[protein] + phosphate. In terms of biological role, involved in leaf development regulation. This is Probable protein phosphatase 2C 23 (PLL4) from Arabidopsis thaliana (Mouse-ear cress).